Consider the following 354-residue polypeptide: Uroporphyrinogen decarboxylase (354 aa).

Substrate-binding positions include 27 to 31, D77, Y154, T209, and H327; that span reads RQAGR.

Belongs to the uroporphyrinogen decarboxylase family. As to quaternary structure, homodimer.

Its subcellular location is the cytoplasm. The catalysed reaction is uroporphyrinogen III + 4 H(+) = coproporphyrinogen III + 4 CO2. Its pathway is porphyrin-containing compound metabolism; protoporphyrin-IX biosynthesis; coproporphyrinogen-III from 5-aminolevulinate: step 4/4. Functionally, catalyzes the decarboxylation of four acetate groups of uroporphyrinogen-III to yield coproporphyrinogen-III. This Cronobacter sakazakii (strain ATCC BAA-894) (Enterobacter sakazakii) protein is Uroporphyrinogen decarboxylase.